Here is a 213-residue protein sequence, read N- to C-terminus: ATP-dependent Clp protease proteolytic subunit (213 aa).

Residue Ser-114 is the Nucleophile of the active site. His-139 is an active-site residue.

The protein belongs to the peptidase S14 family. In terms of assembly, fourteen ClpP subunits assemble into 2 heptameric rings which stack back to back to give a disk-like structure with a central cavity, resembling the structure of eukaryotic proteasomes.

It localises to the cytoplasm. The catalysed reaction is Hydrolysis of proteins to small peptides in the presence of ATP and magnesium. alpha-casein is the usual test substrate. In the absence of ATP, only oligopeptides shorter than five residues are hydrolyzed (such as succinyl-Leu-Tyr-|-NHMec, and Leu-Tyr-Leu-|-Tyr-Trp, in which cleavage of the -Tyr-|-Leu- and -Tyr-|-Trp bonds also occurs).. Functionally, cleaves peptides in various proteins in a process that requires ATP hydrolysis. Has a chymotrypsin-like activity. Plays a major role in the degradation of misfolded proteins. The chain is ATP-dependent Clp protease proteolytic subunit from Pseudomonas syringae pv. syringae (strain B728a).